The primary structure comprises 115 residues: Small ribosomal subunit protein uS17 (115 aa).

Belongs to the universal ribosomal protein uS17 family. As to quaternary structure, part of the 30S ribosomal subunit.

Functionally, one of the primary rRNA binding proteins, it binds specifically to the 5'-end of 16S ribosomal RNA. This chain is Small ribosomal subunit protein uS17, found in Granulibacter bethesdensis (strain ATCC BAA-1260 / CGDNIH1).